We begin with the raw amino-acid sequence, 460 residues long: Bifunctional protein GlmU (460 aa).

A pyrophosphorylase region spans residues 1–235; it reads MALSAAIILA…PLSVEGVNDR (235 aa). UDP-N-acetyl-alpha-D-glucosamine is bound by residues 9 to 12, K23, Q76, and 81 to 82; these read LAAG and GT. D109 provides a ligand contact to Mg(2+). 4 residues coordinate UDP-N-acetyl-alpha-D-glucosamine: G146, E161, N176, and N233. Mg(2+) is bound at residue N233. The linker stretch occupies residues 236–256; that stretch reads VQLAALAKAHNKRVCEHWMRE. The N-acetyltransferase stretch occupies residues 257-460; it reads GVTILDPDTT…VEGWKPEWER (204 aa). Residues R338 and K356 each coordinate UDP-N-acetyl-alpha-D-glucosamine. The active-site Proton acceptor is the H368. 2 residues coordinate UDP-N-acetyl-alpha-D-glucosamine: Y371 and N382. Residues 391-392 and A428 each bind acetyl-CoA; that span reads NY.

It in the N-terminal section; belongs to the N-acetylglucosamine-1-phosphate uridyltransferase family. The protein in the C-terminal section; belongs to the transferase hexapeptide repeat family. In terms of assembly, homotrimer. Mg(2+) serves as cofactor.

The protein localises to the cytoplasm. The catalysed reaction is alpha-D-glucosamine 1-phosphate + acetyl-CoA = N-acetyl-alpha-D-glucosamine 1-phosphate + CoA + H(+). The enzyme catalyses N-acetyl-alpha-D-glucosamine 1-phosphate + UTP + H(+) = UDP-N-acetyl-alpha-D-glucosamine + diphosphate. Its pathway is nucleotide-sugar biosynthesis; UDP-N-acetyl-alpha-D-glucosamine biosynthesis; N-acetyl-alpha-D-glucosamine 1-phosphate from alpha-D-glucosamine 6-phosphate (route II): step 2/2. The protein operates within nucleotide-sugar biosynthesis; UDP-N-acetyl-alpha-D-glucosamine biosynthesis; UDP-N-acetyl-alpha-D-glucosamine from N-acetyl-alpha-D-glucosamine 1-phosphate: step 1/1. It participates in bacterial outer membrane biogenesis; LPS lipid A biosynthesis. In terms of biological role, catalyzes the last two sequential reactions in the de novo biosynthetic pathway for UDP-N-acetylglucosamine (UDP-GlcNAc). The C-terminal domain catalyzes the transfer of acetyl group from acetyl coenzyme A to glucosamine-1-phosphate (GlcN-1-P) to produce N-acetylglucosamine-1-phosphate (GlcNAc-1-P), which is converted into UDP-GlcNAc by the transfer of uridine 5-monophosphate (from uridine 5-triphosphate), a reaction catalyzed by the N-terminal domain. This chain is Bifunctional protein GlmU, found in Bifidobacterium adolescentis (strain ATCC 15703 / DSM 20083 / NCTC 11814 / E194a).